The following is a 434-amino-acid chain: Enolase (434 aa).

A (2R)-2-phosphoglycerate-binding site is contributed by glutamine 163. Glutamate 205 serves as the catalytic Proton donor. Mg(2+) contacts are provided by aspartate 242, glutamate 291, and aspartate 318. Residues lysine 343, arginine 372, serine 373, and lysine 394 each coordinate (2R)-2-phosphoglycerate. Lysine 343 functions as the Proton acceptor in the catalytic mechanism.

Belongs to the enolase family. Mg(2+) is required as a cofactor.

It localises to the cytoplasm. The protein resides in the secreted. The protein localises to the cell surface. The enzyme catalyses (2R)-2-phosphoglycerate = phosphoenolpyruvate + H2O. The protein operates within carbohydrate degradation; glycolysis; pyruvate from D-glyceraldehyde 3-phosphate: step 4/5. Functionally, catalyzes the reversible conversion of 2-phosphoglycerate (2-PG) into phosphoenolpyruvate (PEP). It is essential for the degradation of carbohydrates via glycolysis. This is Enolase from Streptococcus pneumoniae serotype 19F (strain G54).